The chain runs to 990 residues: Type III restriction-modification enzyme StyLTI Res subunit (990 aa).

Residues 50 to 545 (NIDVKMETGT…GLRLPVDENG (496 aa)) form a helicase-like domain region. A VRR-NUC domain is found at 884–970 (LLKYDYPQQV…RQNINVEFAE (87 aa)). The endonuclease domain stretch occupies residues 913 to 937 (STTPDFVYRIERQDADSVYLLVETK).

Belongs to the type III restriction-modification system Res protein family. Contains two different subunits: Res and Mod. Requires Mg(2+) as cofactor. It depends on S-adenosyl-L-methionine as a cofactor.

The catalysed reaction is Endonucleolytic cleavage of DNA to give specific double-stranded fragments with terminal 5'-phosphates.. Its function is as follows. A type III restriction enzyme that recognizes 2 inversely oriented double-stranded sequences 5'-CAGAG-3' and cleaves DNA 25-27 base pairs downstream. After binding to one recognition site undergoes random one-dimensional diffusion along DNA until it collides with a stationary enzyme bound to the second DNA site, which is when DNA cleavage occurs. DNA restriction requires both the Res and Mod subunits. The sequence is that of Type III restriction-modification enzyme StyLTI Res subunit from Salmonella typhimurium (strain LT2 / SGSC1412 / ATCC 700720).